The chain runs to 310 residues: Olfactory receptor 2A14 (310 aa).

At 1–24 the chain is on the extracellular side; sequence MEGNKTWITDITLPRFQVGPALEI. Asparagine 4 is a glycosylation site (N-linked (GlcNAc...) asparagine). A helical transmembrane segment spans residues 25–48; it reads LLCGLFSAFYTLTLLGNGVIFGII. At 49 to 56 the chain is on the cytoplasmic side; sequence CLDCKLHT. The helical transmembrane segment at 57–78 threads the bilayer; it reads PMYFFLSHLAIVDISYASNYVP. At 79-99 the chain is on the extracellular side; the sequence is KMLTNLMNQESTISFFPCIMQ. An intrachain disulfide couples cysteine 96 to cysteine 188. A helical transmembrane segment spans residues 100-119; that stretch reads TFLYLAFAHVECLILVVMSY. The Cytoplasmic segment spans residues 120–138; the sequence is DRYADICHPLRYNSLMSWR. Residues 139–157 form a helical membrane-spanning segment; sequence VCTVLAVASWVFSFLLALV. Residues 158 to 194 lie on the Extracellular side of the membrane; it reads PLVLILSLPFCGPHEINHFFCEILSVLKLACADTWLN. Residues 195–218 traverse the membrane as a helical segment; sequence QVVIFAACVFILVGPLCLVLVSYL. Residues 219–235 are Cytoplasmic-facing; that stretch reads RILAAILRIQSGEGRRK. The chain crosses the membrane as a helical span at residues 236–258; sequence AFSTCSSHLCVVGLFFGSAIVTY. The Extracellular segment spans residues 259-271; that stretch reads MAPKSRHPEEQQK. The chain crosses the membrane as a helical span at residues 272-291; it reads VLSLFYSLFNPMLNPLIYSL. Topologically, residues 292–310 are cytoplasmic; sequence RNAEVKGALRRALRKERLT.

Belongs to the G-protein coupled receptor 1 family.

The protein resides in the cell membrane. Its function is as follows. Odorant receptor. The chain is Olfactory receptor 2A14 (OR2A14) from Homo sapiens (Human).